The following is a 390-amino-acid chain: GTPase Obg/CgtA (390 aa).

The Obg domain maps to 1–159; the sequence is MKFVDEAVIK…RDIRLELLLL (159 aa). The OBG-type G domain occupies 160 to 333; that stretch reads ADVGMLGMPN…LCMKLAEFMD (174 aa). GTP contacts are provided by residues 166 to 173, 191 to 195, 213 to 216, 283 to 286, and 314 to 316; these read GMPNAGKS, FTTLV, DIPG, NKVD, and SAA. Residues Ser173 and Thr193 each coordinate Mg(2+).

The protein belongs to the TRAFAC class OBG-HflX-like GTPase superfamily. OBG GTPase family. Monomer. Interacts with SpoT (AC Q9KNM2) in a yeast 2-hybrid assay. Requires Mg(2+) as cofactor.

It is found in the cytoplasm. Its function is as follows. Depletion experiments lead to gene down regulation and a dramatic increase in ppGpp levels, like those seen in the stringent response. There is no change in cell morphology in depletion experiments, but cells are very sensitive to the DNA-damaging agent hydroxyurea and are very elongated. Overexpression reduces growth and leads to elongated cells. Overexpression of proteins with C-terminal deletions of 29 or 62 amino acids showed fewer elongated cells. Functionally, an essential GTPase which binds GTP, GDP and possibly (p)ppGpp with moderate affinity, with high nucleotide exchange rates and a fairly low GTP hydrolysis rate. It may play a role in control of the cell cycle, stress response, ribosome biogenesis and in those bacteria that undergo differentiation, in morphogenesis control. GTPase activity is stimulated by 50S ribosomal subunits. This is GTPase Obg/CgtA from Vibrio cholerae serotype O1 (strain ATCC 39315 / El Tor Inaba N16961).